The sequence spans 484 residues: Hexokinase-1 (484 aa).

A Hexokinase domain is found at 25 to 465 (KTLQDHLDEL…SGVGAALVSA (441 aa)). A hexokinase small subdomain region spans residues 79–212 (DGNEHGSYLA…CNNVRLNAIL (134 aa)). Residue 90 to 95 (DLGGTN) coordinates ATP. Substrate is bound by residues 160 to 161 (SY), 177 to 178 (TK), and 213 to 214 (SD). Positions 213-454 (SDTTGTLVAS…SKVVTIPAED (242 aa)) are hexokinase large subdomain. T237 lines the ATP pocket. Residues N240, E269, and E302 each contribute to the substrate site. ATP-binding positions include 307-308 (GC), 344-348 (TSVLS), and 419-423 (SVYNL).

This sequence belongs to the hexokinase family. Monomer.

It catalyses the reaction a D-hexose + ATP = a D-hexose 6-phosphate + ADP + H(+). It carries out the reaction D-mannose + ATP = D-mannose 6-phosphate + ADP + H(+). The enzyme catalyses D-fructose + ATP = D-fructose 6-phosphate + ADP + H(+). The catalysed reaction is D-glucose + ATP = D-glucose 6-phosphate + ADP + H(+). It participates in carbohydrate metabolism; hexose metabolism. The protein operates within carbohydrate degradation; glycolysis; D-glyceraldehyde 3-phosphate and glycerone phosphate from D-glucose: step 1/4. Functionally, catalyzes the phosphorylation of hexose (six-carbon sugars) to hexose 6-phosphate. Phosphorylates D-fructose, D-mannose and, to a lower extent, D-glucose. Compared to hxk2, has low affinity for D-glucose. This is Hexokinase-1 from Schizosaccharomyces pombe (strain 972 / ATCC 24843) (Fission yeast).